A 145-amino-acid chain; its full sequence is Superoxide dismutase [Cu-Zn] (145 aa).

Cu cation contacts are provided by His-37, His-39, and His-54. A disulfide bond links Cys-48 and Cys-137. Zn(2+) is bound by residues His-54, His-62, His-71, and Asp-74. Residue His-111 coordinates Cu cation.

The protein belongs to the Cu-Zn superoxide dismutase family. Homodimer. Cu cation is required as a cofactor. Requires Zn(2+) as cofactor.

The protein resides in the cytoplasm. The catalysed reaction is 2 superoxide + 2 H(+) = H2O2 + O2. Destroys radicals which are normally produced within the cells and which are toxic to biological systems. The protein is Superoxide dismutase [Cu-Zn] of Drosophila busckii (Fruit fly).